Here is a 207-residue protein sequence, read N- to C-terminus: Thiamine-phosphate synthase (207 aa).

4-amino-2-methyl-5-(diphosphooxymethyl)pyrimidine-binding positions include 37 to 41 and Asn69; that span reads QYRDK. Residues Asp70 and Asp89 each coordinate Mg(2+). Ser108 provides a ligand contact to 4-amino-2-methyl-5-(diphosphooxymethyl)pyrimidine. Residue 135-137 coordinates 2-[(2R,5Z)-2-carboxy-4-methylthiazol-5(2H)-ylidene]ethyl phosphate; that stretch reads SRT. Lys138 provides a ligand contact to 4-amino-2-methyl-5-(diphosphooxymethyl)pyrimidine. 2-[(2R,5Z)-2-carboxy-4-methylthiazol-5(2H)-ylidene]ethyl phosphate is bound at residue Gly164.

The protein belongs to the thiamine-phosphate synthase family. It depends on Mg(2+) as a cofactor.

It carries out the reaction 2-[(2R,5Z)-2-carboxy-4-methylthiazol-5(2H)-ylidene]ethyl phosphate + 4-amino-2-methyl-5-(diphosphooxymethyl)pyrimidine + 2 H(+) = thiamine phosphate + CO2 + diphosphate. The catalysed reaction is 2-(2-carboxy-4-methylthiazol-5-yl)ethyl phosphate + 4-amino-2-methyl-5-(diphosphooxymethyl)pyrimidine + 2 H(+) = thiamine phosphate + CO2 + diphosphate. The enzyme catalyses 4-methyl-5-(2-phosphooxyethyl)-thiazole + 4-amino-2-methyl-5-(diphosphooxymethyl)pyrimidine + H(+) = thiamine phosphate + diphosphate. It participates in cofactor biosynthesis; thiamine diphosphate biosynthesis; thiamine phosphate from 4-amino-2-methyl-5-diphosphomethylpyrimidine and 4-methyl-5-(2-phosphoethyl)-thiazole: step 1/1. Condenses 4-methyl-5-(beta-hydroxyethyl)thiazole monophosphate (THZ-P) and 2-methyl-4-amino-5-hydroxymethyl pyrimidine pyrophosphate (HMP-PP) to form thiamine monophosphate (TMP). The protein is Thiamine-phosphate synthase of Chromobacterium violaceum (strain ATCC 12472 / DSM 30191 / JCM 1249 / CCUG 213 / NBRC 12614 / NCIMB 9131 / NCTC 9757 / MK).